Here is a 752-residue protein sequence, read N- to C-terminus: Double zinc ribbon and ankyrin repeat-containing protein 1 (752 aa).

DZANK-type zinc fingers lie at residues 210-270 (CPKC…VVCE) and 338-386 (CSKC…GGCG). The segment covering 448–469 (KKRSQQREAELSRQEQMRDRKP) has biased composition (basic and acidic residues). 2 disordered regions span residues 448-471 (KKRS…KPLL) and 536-614 (PPEE…VGPE). A compositionally biased stretch (low complexity) spans 536–554 (PPEESRSSSAGQRSRSVTS). The segment covering 555–580 (ESQNLSSVTEGRNSASPENNINTTGS) has biased composition (polar residues). The span at 600–614 (PESKDSLLLKEVGPE) shows a compositional bias: basic and acidic residues. ANK repeat units follow at residues 638–667 (DGRP…DVNQ), 672–703 (LKNT…SIRK), and 707–737 (RGQT…GLLL).

The protein resides in the cytoplasm. The protein localises to the cytoskeleton. It localises to the microtubule organizing center. Its subcellular location is the centrosome. It is found in the cilium basal body. In terms of biological role, required for the intracellular transport of organelles and vesicles, and is essential for the photoreceptor's outer segments formation, maintenance and function. The protein is Double zinc ribbon and ankyrin repeat-containing protein 1 (dzank1) of Danio rerio (Zebrafish).